We begin with the raw amino-acid sequence, 100 residues long: Urease subunit gamma (100 aa).

This sequence belongs to the urease gamma subunit family. As to quaternary structure, heterotrimer of UreA (gamma), UreB (beta) and UreC (alpha) subunits. Three heterotrimers associate to form the active enzyme.

It is found in the cytoplasm. The enzyme catalyses urea + 2 H2O + H(+) = hydrogencarbonate + 2 NH4(+). It participates in nitrogen metabolism; urea degradation; CO(2) and NH(3) from urea (urease route): step 1/1. The protein is Urease subunit gamma of Stutzerimonas stutzeri (strain A1501) (Pseudomonas stutzeri).